The chain runs to 785 residues: Putative endonuclease MutS2 (785 aa).

335-342 (GPNTGGKT) serves as a coordination point for ATP. The stretch at 513–586 (TAEHNEVDTM…AEKVKAAMKE (74 aa)) forms a coiled coil. The segment at 636-785 (KRDFKPGDEV…GSGVTVVELK (150 aa)) is partially complements a deletion for mitomycin C (MMC) resistance and for chromosomal DNA transformation. The KOW region stretch occupies residues 641-681 (PGDEVKVLTFGQKGTLLEKTGGNEWNVQIGILKMKVKEKDL). The Smr domain occupies 710-785 (LDLRGERYEN…GSGVTVVELK (76 aa)).

The protein belongs to the DNA mismatch repair MutS family. MutS2 subfamily. In terms of assembly, binds to ribosomes as a homodimer. Binds to stalled/collided disomes, association is greater in (ribosome-targeted) antibiotic-treated cells (with increased stalling at specific mRNA sites). The clamp domain of one monomer binds the A-site finger, the 23S rRNA of the central protuberance and ribosomal protein uL5 of the leading (stalled) ribosome, while the other monomer binds in a gap between the ribosomal central protuberance and the L1 stalk of the leading ribosome.

The protein resides in the cytoplasm. Acts as a ribosome collision sensor splitting the ribosome into its 2 subunits. Detects stalled/collided disomes (pairs of ribosomes where the leading ribosome is stalled and a second ribosome has collided with it) which it binds and splits, by an ATP-hydrolysis driven conformational change. Does not seem to have endoribonuclease activity (in the context of ribosome stalling). Acts upstream of the ribosome quality control system (RQC), a ribosome-associated complex that mediates the extraction of incompletely synthesized nascent chains from stalled ribosomes and their subsequent degradation, probably generates substrates for RQC. Functionally, does not seem to be involved in mismatch repair or in the prevention of interspecific recombination during DNA transformation. Might be involved in homologous recombination. Putative endonuclease that may be involved in the suppression of homologous recombination and may therefore have a key role in the control of bacterial genetic diversity. This is Putative endonuclease MutS2 from Bacillus subtilis (strain 168).